Reading from the N-terminus, the 424-residue chain is 3-oxo-tetronate kinase (424 aa).

Residues Ser264, 363–366 (GGET), and Gly408 each bind ATP.

The protein belongs to the four-carbon acid sugar kinase family.

It catalyses the reaction 3-dehydro-L-erythronate + ATP = 3-dehydro-4-O-phospho-L-erythronate + ADP + H(+). The catalysed reaction is 3-dehydro-D-erythronate + ATP = 3-dehydro-4-O-phospho-D-erythronate + ADP + H(+). Functionally, catalyzes the ATP-dependent phosphorylation of 3-oxo-tetronate to 3-oxo-tetronate 4-phosphate. This chain is 3-oxo-tetronate kinase, found in Methylobacterium radiotolerans (strain ATCC 27329 / DSM 1819 / JCM 2831 / NBRC 15690 / NCIMB 10815 / 0-1).